The sequence spans 434 residues: MLRIVSHLAEAQAELERICDRTHDDAVVHREASVREIVQAVQRRGDAALIEFTQEFDGFALQAENLRVSGAELDAAYQQIPKELLDAIRLAHHQIEAFHRQRVPKSWVQFGADGEVLGKRYTPVDRAGLYVPGGRAAYPSTVLMNAVPAKVAGVERVVITTPPGPDGSLNPAVLVAAQEAGIEEIYRVGGAQAIAALAYGTATIPKVDVISGPGNIYVTLAKKLVYGTVGIDSLAGPSEVLIIADRSANPRWVAADLLAQAEHDPLAAAILITPDLELATQVGFEVERQLQDHPRRLVTEKAIAHYGLAIVVDSLETAVKLSNQFAPEHLELEVEDPWALVEQVRHAGAIFLGSLTPEAIGDYVAGPNHTLPTSGAARYASALSVETFLKSSSLIEYTAASLQRVARAVDVLATAEGLESHAESVRLRQQSLDR.

NAD(+) contacts are provided by Y130, Q192, and N215. Residues S238, Q260, and H263 each contribute to the substrate site. Zn(2+) is bound by residues Q260 and H263. Catalysis depends on proton acceptor residues E328 and H329. Substrate is bound by residues H329, D362, E416, and H421. Position 362 (D362) interacts with Zn(2+). Residue H421 coordinates Zn(2+).

It belongs to the histidinol dehydrogenase family. Requires Zn(2+) as cofactor.

The catalysed reaction is L-histidinol + 2 NAD(+) + H2O = L-histidine + 2 NADH + 3 H(+). Its pathway is amino-acid biosynthesis; L-histidine biosynthesis; L-histidine from 5-phospho-alpha-D-ribose 1-diphosphate: step 9/9. Its function is as follows. Catalyzes the sequential NAD-dependent oxidations of L-histidinol to L-histidinaldehyde and then to L-histidine. The polypeptide is Histidinol dehydrogenase (Synechococcus sp. (strain ATCC 27144 / PCC 6301 / SAUG 1402/1) (Anacystis nidulans)).